The primary structure comprises 437 residues: 5-hydroxytryptamine receptor 3B (437 aa).

A signal peptide spans 1-21; the sequence is MILLWSCLLVAVVGILGTATP. At 22–238 the chain is on the extracellular side; sequence QPGNSSLHRL…VVIRRCPLAY (217 aa). Asn25, Asn92, and Asn134 each carry an N-linked (GlcNAc...) asparagine glycan. A disulfide bridge links Cys151 with Cys165. A helical transmembrane segment spans residues 239–259; it reads VVSLLIPSIFLMLVDLGSFYL. Residues 260–264 are Cytoplasmic-facing; that stretch reads PPNCR. Residues 265–282 form a helical membrane-spanning segment; the sequence is ARIVFKTNVLVGYTVFRV. Residue Asn283 is glycosylated (N-linked (GlcNAc...) asparagine). Topologically, residues 283 to 292 are extracellular; that stretch reads NMSDEVPRSA. The chain crosses the membrane as a helical span at residues 293-313; that stretch reads GCTPLIGVFFTVCMALLVLSL. At 314-410 the chain is on the cytoplasmic side; that stretch reads SKSILLIKFL…WLAILYRFDQ (97 aa). Positions 377-409 are HA-stretch; determines single-channel conductance in 5-HT3 receptors; the sequence is FWFQFRSINNSLRTRDQIHQKEVEWLAILYRFD. The helical transmembrane segment at 411–431 threads the bilayer; the sequence is LLFRIYLAVLGLYTVTLCSLW. At 432-437 the chain is on the extracellular side; it reads ALWSRM.

This sequence belongs to the ligand-gated ion channel (TC 1.A.9) family. 5-hydroxytryptamine receptor (TC 1.A.9.2) subfamily. HTR3B sub-subfamily. As to quaternary structure, forms homopentameric as well as heteropentameric serotonin-activated cation-selective channel complexes with HTR3A. The homomeric complex is not functional. Heteropentameric complexes display properties which resemble that of neuronal serotonin-activated channels in vivo. In terms of processing, N-glycosylation is required for membrane localization.

The protein resides in the postsynaptic cell membrane. Its subcellular location is the cell membrane. The enzyme catalyses Na(+)(in) = Na(+)(out). It catalyses the reaction K(+)(in) = K(+)(out). The catalysed reaction is Ca(2+)(in) = Ca(2+)(out). Its function is as follows. Forms serotonin (5-hydroxytryptamine/5-HT3)-activated cation-selective channel complexes, which when activated cause fast, depolarizing responses in neurons. In Mus musculus (Mouse), this protein is 5-hydroxytryptamine receptor 3B.